The primary structure comprises 165 residues: Protein SprT (165 aa).

The region spanning Glu-20–Val-163 is the SprT-like domain. His-78 contributes to the Zn(2+) binding site. Glu-79 is a catalytic residue. His-82 is a binding site for Zn(2+).

The protein belongs to the SprT family. The cofactor is Zn(2+).

The protein localises to the cytoplasm. In Shigella flexneri serotype 5b (strain 8401), this protein is Protein SprT.